The primary structure comprises 206 residues: Adenylate kinase (206 aa).

The segment at 1-21 (MSQPKILLLGAPGAGKGTQSS) is disordered. 13 to 18 (GAGKGT) is an ATP binding site. Residues 33–61 (TTGDALRANKDMETEHGTPREFMEAGELV) are NMP. Residues Thr34, Arg39, 59–61 (ELV), 84–87 (GYPR), and Gln91 contribute to the AMP site. The segment at 120–153 (GRRMDPETGDIYHTEFNMPDDEEVRERLVQRDDD) is LID. Residues Arg121 and 130–131 (IY) each bind ATP. Residues Arg150 and Arg161 each coordinate AMP. Ala189 serves as a coordination point for ATP.

This sequence belongs to the adenylate kinase family. In terms of assembly, monomer.

It is found in the cytoplasm. It carries out the reaction AMP + ATP = 2 ADP. It participates in purine metabolism; AMP biosynthesis via salvage pathway; AMP from ADP: step 1/1. Functionally, catalyzes the reversible transfer of the terminal phosphate group between ATP and AMP. Plays an important role in cellular energy homeostasis and in adenine nucleotide metabolism. This Natronomonas pharaonis (strain ATCC 35678 / DSM 2160 / CIP 103997 / JCM 8858 / NBRC 14720 / NCIMB 2260 / Gabara) (Halobacterium pharaonis) protein is Adenylate kinase.